We begin with the raw amino-acid sequence, 916 residues long: Protein translocase subunit SecA (916 aa).

Residues Gln-87, 105–109 (GEGKT), and Asp-507 each bind ATP. Residues Cys-900, Cys-902, Cys-911, and His-912 each contribute to the Zn(2+) site.

This sequence belongs to the SecA family. Monomer and homodimer. Part of the essential Sec protein translocation apparatus which comprises SecA, SecYEG and auxiliary proteins SecDF-YajC and YidC. The cofactor is Zn(2+).

The protein localises to the cell inner membrane. It is found in the cytoplasm. The catalysed reaction is ATP + H2O + cellular proteinSide 1 = ADP + phosphate + cellular proteinSide 2.. Part of the Sec protein translocase complex. Interacts with the SecYEG preprotein conducting channel. Has a central role in coupling the hydrolysis of ATP to the transfer of proteins into and across the cell membrane, serving both as a receptor for the preprotein-SecB complex and as an ATP-driven molecular motor driving the stepwise translocation of polypeptide chains across the membrane. The chain is Protein translocase subunit SecA from Neisseria meningitidis serogroup C (strain 053442).